A 231-amino-acid chain; its full sequence is DNA mismatch repair protein MutH (231 aa).

The protein belongs to the MutH family.

The protein resides in the cytoplasm. Sequence-specific endonuclease that cleaves unmethylated GATC sequences. It is involved in DNA mismatch repair. The polypeptide is DNA mismatch repair protein MutH (Pectobacterium atrosepticum (strain SCRI 1043 / ATCC BAA-672) (Erwinia carotovora subsp. atroseptica)).